Consider the following 278-residue polypeptide: 4-deoxy-L-threo-5-hexosulose-uronate ketol-isomerase (278 aa).

The Zn(2+) site is built by histidine 196, histidine 198, glutamate 203, and histidine 245.

The protein belongs to the KduI family. Homohexamer. Requires Zn(2+) as cofactor.

It carries out the reaction 5-dehydro-4-deoxy-D-glucuronate = 3-deoxy-D-glycero-2,5-hexodiulosonate. Its pathway is glycan metabolism; pectin degradation; 2-dehydro-3-deoxy-D-gluconate from pectin: step 4/5. Functionally, catalyzes the isomerization of 5-dehydro-4-deoxy-D-glucuronate to 3-deoxy-D-glycero-2,5-hexodiulosonate. The polypeptide is 4-deoxy-L-threo-5-hexosulose-uronate ketol-isomerase (Escherichia coli (strain UTI89 / UPEC)).